Here is a 134-residue protein sequence, read N- to C-terminus: Profilin-1 (134 aa).

Residues Cys13 and Cys118 are joined by a disulfide bond. Residues 84 to 100 (AVVRGKKGSGGITIKKT) carry the Involved in PIP2 interaction motif. Position 114 is a phosphothreonine (Thr114).

Belongs to the profilin family. In terms of assembly, occurs in many kinds of cells as a complex with monomeric actin in a 1:1 ratio. Phosphorylated by MAP kinases.

It is found in the cytoplasm. The protein localises to the cytoskeleton. Its function is as follows. Binds to actin and affects the structure of the cytoskeleton. At high concentrations, profilin prevents the polymerization of actin, whereas it enhances it at low concentrations. The sequence is that of Profilin-1 from Olea europaea (Common olive).